Here is a 550-residue protein sequence, read N- to C-terminus: Metal transporter Nramp4 (550 aa).

Basic and acidic residues predominate over residues 1-13 (MEEGAKIGREHEQ). Residues 1–37 (MEEGAKIGREHEQQQQQHGRVNGSGRVAAVGGGSGGG) are disordered. Over residues 14-29 (QQQQHGRVNGSGRVAA) the composition is skewed to low complexity. 12 helical membrane passes run 72–92 (FLAH…PSNL), 105–125 (SLLW…SLAA), 151–171 (LWLL…LGTA), 177–197 (LLHI…FLIL), 207–227 (MEFT…MELG), 255–275 (VAMF…SLVL), 292–312 (FFLL…VAIV), 354–374 (VYGV…SYAG), 388–408 (IIYL…CSIG), 416–436 (IINI…IPLI), 457–477 (IAWI…CTSF), and 492–512 (AIIS…LIYL).

It belongs to the NRAMP (TC 2.A.55) family.

It localises to the membrane. Functionally, probable metal transporter. This chain is Metal transporter Nramp4 (NRAMP4), found in Oryza sativa subsp. japonica (Rice).